An 883-amino-acid polypeptide reads, in one-letter code: Alanine--tRNA ligase (883 aa).

Zn(2+)-binding residues include His-560, His-564, Cys-665, and His-669.

The protein belongs to the class-II aminoacyl-tRNA synthetase family. The cofactor is Zn(2+).

It is found in the cytoplasm. The catalysed reaction is tRNA(Ala) + L-alanine + ATP = L-alanyl-tRNA(Ala) + AMP + diphosphate. Functionally, catalyzes the attachment of alanine to tRNA(Ala) in a two-step reaction: alanine is first activated by ATP to form Ala-AMP and then transferred to the acceptor end of tRNA(Ala). Also edits incorrectly charged Ser-tRNA(Ala) and Gly-tRNA(Ala) via its editing domain. The sequence is that of Alanine--tRNA ligase from Mesomycoplasma hyopneumoniae (strain 232) (Mycoplasma hyopneumoniae).